The primary structure comprises 365 residues: Palmitoyltransferase ZDHHC20 (365 aa).

The Cytoplasmic segment spans residues 1–14; the sequence is MAPWTLWRCCQRVV. The helical transmembrane segment at 15 to 35 threads the bilayer; it reads GWVPVLFITFVVVWSYYAYVV. The Lumenal portion of the chain corresponds to 36–53; it reads ELCVFTIFGNEENGKTVV. A helical transmembrane segment spans residues 54–74; that stretch reads YLVAFHLFFVMFVWSYWMTIF. Over 75–169 the chain is Cytoplasmic; the sequence is TSPASPSKEF…NNCVGFSNYK (95 aa). The DHHC domain maps to 126-176; that stretch reads RYCEKCQLIKPDRAHHCSACDSCILKMDHHCPWVNNCVGFSNYKFFLLFLL. Zn(2+) is bound by residues Cys128 and Cys131. Substrate contacts are provided by residues Lys135 and 140–143; that span reads HHCS. Zn(2+) contacts are provided by His141, Cys142, Cys145, Cys148, and His155. Cys156 serves as the catalytic S-palmitoyl cysteine intermediate. Cys162 lines the Zn(2+) pocket. A helical transmembrane segment spans residues 170–190; that stretch reads FFLLFLLYSLLYCLFVAATVL. At 191-207 the chain is on the lumenal side; the sequence is EYFIKFWTNELTDTRAK. A helical transmembrane segment spans residues 208–231; sequence FHVLFLFFVSAMFFISVLSLFSYH. Residues 232–365 lie on the Cytoplasmic side of the membrane; it reads CWLVGKNRTT…NNHVTVAIEN (134 aa). Residues Ser305, Ser330, and Ser339 each carry the phosphoserine modification.

Belongs to the DHHC palmitoyltransferase family. Autopalmitoylated (in vitro).

The protein resides in the golgi apparatus membrane. The protein localises to the cell membrane. It is found in the cytoplasm. It localises to the perinuclear region. Its subcellular location is the endoplasmic reticulum membrane. The protein resides in the endoplasmic reticulum-Golgi intermediate compartment membrane. It carries out the reaction L-cysteinyl-[protein] + hexadecanoyl-CoA = S-hexadecanoyl-L-cysteinyl-[protein] + CoA. It catalyses the reaction L-cysteinyl-[protein] + tetradecanoyl-CoA = S-tetradecanoyl-L-cysteinyl-[protein] + CoA. The catalysed reaction is L-cysteinyl-[protein] + octadecanoyl-CoA = S-octadecanoyl-L-cysteinyl-[protein] + CoA. Palmitoyltransferase that could catalyze the addition of palmitate onto various protein substrates. Catalyzes palmitoylation of Cys residues in the cytoplasmic C-terminus of EGFR, and modulates the duration of EGFR signaling by modulating palmitoylation-dependent EGFR internalization and degradation. Has a preference for acyl-CoA with C16 fatty acid chains. Can also utilize acyl-CoA with C14 and C18 fatty acid chains. May palmitoylate CALHM1 subunit of gustatory voltage-gated ion channels and modulate channel gating and kinetics. Functionally, (Microbial infection) Dominant palmitoyltransferase responsible for lipidation of SARS coronavirus-2/SARS-CoV-2 spike protein. Through a sequential action with ZDHHC9, rapidly and efficiently palmitoylates spike protein following its synthesis in the endoplasmic reticulum (ER). In the infected cell, promotes spike biogenesis by protecting it from premature ER degradation, increases half-life and controls the lipid organization of its immediate membrane environment. Once the virus has formed, spike palmitoylation controls fusion with the target cell. This is Palmitoyltransferase ZDHHC20 from Homo sapiens (Human).